A 305-amino-acid chain; its full sequence is MIPLIAIVGPTAVGKTALSIRLAQQFNGEIVSVDSRQVYRGMDIGTAKPTPAERAAVPHHLIDIVDPDEAFSLAVYQDLATAAIADIAARGRLPFLVGGTGQYLAAVLQGWQLPRVAPRPDIRAALERQAAELGAAALYARLAEIDPAAAASIPPNNIRRIIRALEVYEATGKPISEQRSVQPPPYHTVTIWLTLPTPALYARIDARVEAMIAAGLLDEVHRLLERGYHWDLPSMSGLGYREFRPYFEGRITLDEAIARLKYDTHAFARRQPAWFRRLPNVLTLPADASDLQQQAATIVRQWIDA.

Residue 9 to 16 (GPTAVGKT) participates in ATP binding. 11 to 16 (TAVGKT) lines the substrate pocket. The interval 34 to 37 (DSRQ) is interaction with substrate tRNA.

Belongs to the IPP transferase family. In terms of assembly, monomer. The cofactor is Mg(2+).

The catalysed reaction is adenosine(37) in tRNA + dimethylallyl diphosphate = N(6)-dimethylallyladenosine(37) in tRNA + diphosphate. Catalyzes the transfer of a dimethylallyl group onto the adenine at position 37 in tRNAs that read codons beginning with uridine, leading to the formation of N6-(dimethylallyl)adenosine (i(6)A). The sequence is that of tRNA dimethylallyltransferase from Roseiflexus sp. (strain RS-1).